Consider the following 333-residue polypeptide: Mitochondrial fission regulator 1 (333 aa).

A mitochondrion-targeting transit peptide spans 1–48; the sequence is MLGWIKRLIRMVFQQVGVSMQSVLWSRKPYGSSRSIVRKIGTNLSLIQ. Phosphoserine is present on S119. Positions 137-169 form a coiled coil; that stretch reads NEEALQKICALENELAALRAQIAKIVTQQEQQN. 2 disordered regions span residues 177-198 and 288-315; these read STTF…PPPA and SDSQ…FGPH. A necessary and sufficient to promote mitochondrial fission region spans residues 179–304; the sequence is TFGTIPPHPP…EKGIPKSESE (126 aa). A compositionally biased stretch (pro residues) spans 184-198; the sequence is PPHPPPPPPPLPPPA. The span at 288 to 307 shows a compositional bias: basic and acidic residues; that stretch reads SDSQDEVEKGIPKSESEATS.

This sequence belongs to the MTFR1 family.

Its subcellular location is the mitochondrion. Its function is as follows. May play a role in mitochondrial aerobic respiration. May also regulate mitochondrial organization and fission. This is Mitochondrial fission regulator 1 (MTFR1) from Homo sapiens (Human).